The chain runs to 127 residues: Probable glycine cleavage system H protein (127 aa).

Residues 24–106 form the Lipoyl-binding domain; the sequence is TAEVGITAFA…FGDGWMLTVE (83 aa). An N6-lipoyllysine modification is found at lysine 65.

It belongs to the GcvH family. As to quaternary structure, the glycine cleavage system is composed of four proteins: P, T, L and H. (R)-lipoate is required as a cofactor.

The glycine cleavage system catalyzes the degradation of glycine. The H protein shuttles the methylamine group of glycine from the P protein to the T protein. This is Probable glycine cleavage system H protein from Haloarcula marismortui (strain ATCC 43049 / DSM 3752 / JCM 8966 / VKM B-1809) (Halobacterium marismortui).